Consider the following 433-residue polypeptide: 3-phosphoshikimate 1-carboxyvinyltransferase (433 aa).

Positions 22, 23, and 27 each coordinate 3-phosphoshikimate. Position 22 (K22) interacts with phosphoenolpyruvate. Phosphoenolpyruvate-binding residues include G95 and R123. Residues S167, Q169, D315, and K342 each contribute to the 3-phosphoshikimate site. Position 169 (Q169) interacts with phosphoenolpyruvate. D315 (proton acceptor) is an active-site residue. Phosphoenolpyruvate-binding residues include R346 and R387.

This sequence belongs to the EPSP synthase family. In terms of assembly, monomer.

The protein localises to the cytoplasm. It catalyses the reaction 3-phosphoshikimate + phosphoenolpyruvate = 5-O-(1-carboxyvinyl)-3-phosphoshikimate + phosphate. Its pathway is metabolic intermediate biosynthesis; chorismate biosynthesis; chorismate from D-erythrose 4-phosphate and phosphoenolpyruvate: step 6/7. Catalyzes the transfer of the enolpyruvyl moiety of phosphoenolpyruvate (PEP) to the 5-hydroxyl of shikimate-3-phosphate (S3P) to produce enolpyruvyl shikimate-3-phosphate and inorganic phosphate. This is 3-phosphoshikimate 1-carboxyvinyltransferase from Legionella pneumophila (strain Lens).